A 288-amino-acid polypeptide reads, in one-letter code: UPF0761 membrane protein HSM_1104 (288 aa).

A run of 6 helical transmembrane segments spans residues 36-56 (TLAL…FPVF), 92-112 (QMSA…IHSI), 127-147 (PAIF…IVIA), 176-196 (LLSL…YMVV), 200-220 (KVSI…FTLG), and 240-260 (AMAT…AVLL).

The protein belongs to the UPF0761 family.

It is found in the cell inner membrane. This Histophilus somni (strain 2336) (Haemophilus somnus) protein is UPF0761 membrane protein HSM_1104.